Reading from the N-terminus, the 361-residue chain is Isocitrate dehydrogenase [NAD] subunit 1, mitochondrial (361 aa).

Residues 1–12 constitute a mitochondrion transit peptide; the sequence is MLRQGIAAQKKS. 3 residues coordinate substrate: R110, R141, and D229. Residue D229 coordinates Mg(2+).

Belongs to the isocitrate and isopropylmalate dehydrogenases family. Octamer of two non-identical subunits IDH1 and IDH2. Mg(2+) is required as a cofactor. It depends on Mn(2+) as a cofactor.

The protein localises to the mitochondrion. It catalyses the reaction D-threo-isocitrate + NAD(+) = 2-oxoglutarate + CO2 + NADH. Performs an essential role in the oxidative function of the citric acid cycle. This Kluyveromyces lactis (strain ATCC 8585 / CBS 2359 / DSM 70799 / NBRC 1267 / NRRL Y-1140 / WM37) (Yeast) protein is Isocitrate dehydrogenase [NAD] subunit 1, mitochondrial (IDH1).